Consider the following 122-residue polypeptide: Small ribosomal subunit protein uS13 (122 aa).

Residues 94–122 (KQLPVRGQRTHTNARTRKGKAKPIAGKKK) form a disordered region.

This sequence belongs to the universal ribosomal protein uS13 family. As to quaternary structure, part of the 30S ribosomal subunit. Forms a loose heterodimer with protein S19. Forms two bridges to the 50S subunit in the 70S ribosome.

In terms of biological role, located at the top of the head of the 30S subunit, it contacts several helices of the 16S rRNA. In the 70S ribosome it contacts the 23S rRNA (bridge B1a) and protein L5 of the 50S subunit (bridge B1b), connecting the 2 subunits; these bridges are implicated in subunit movement. Contacts the tRNAs in the A and P-sites. The polypeptide is Small ribosomal subunit protein uS13 (Methylorubrum extorquens (strain PA1) (Methylobacterium extorquens)).